The chain runs to 247 residues: tRNA (guanine-N(7)-)-methyltransferase (247 aa).

S-adenosyl-L-methionine contacts are provided by residues Gly70, 93–94 (EI), 128–129 (NA), and Leu148. The active site involves Asp151. 226 to 228 (SEE) contacts S-adenosyl-L-methionine.

Belongs to the class I-like SAM-binding methyltransferase superfamily. TrmB family.

It localises to the nucleus. The catalysed reaction is guanosine(46) in tRNA + S-adenosyl-L-methionine = N(7)-methylguanosine(46) in tRNA + S-adenosyl-L-homocysteine. The protein operates within tRNA modification; N(7)-methylguanine-tRNA biosynthesis. Functionally, catalyzes the formation of N(7)-methylguanine at position 46 (m7G46) in tRNA. The sequence is that of tRNA (guanine-N(7)-)-methyltransferase from Drosophila pseudoobscura pseudoobscura (Fruit fly).